A 156-amino-acid polypeptide reads, in one-letter code: Holliday junction resolvase (156 aa).

This sequence belongs to the RuvC family. Poxviruses-type subfamily. Requires Mg(2+) as cofactor.

Its function is as follows. Nuclease that specifically cleaves and resolves four-way DNA Holliday junctions into linear duplex products. This Vertebrata (FPV) protein is Holliday junction resolvase.